A 1050-amino-acid polypeptide reads, in one-letter code: uncharacterized protein (1050 aa).

Coiled coils occupy residues 1–420 (MEKV…TAKM), 463–627 (YSLL…IREL), and 692–981 (NDSK…NLLS).

This is an uncharacterized protein from Arabidopsis thaliana (Mouse-ear cress).